We begin with the raw amino-acid sequence, 257 residues long: Peptide methionine sulfoxide reductase (257 aa).

The tract at residues 61–88 is disordered; sequence LGFGSRPQPDPAASSAIAQGPDDDVPSP. Ser244 bears the Phosphoserine mark.

Belongs to the MsrA Met sulfoxide reductase family.

The catalysed reaction is L-methionyl-[protein] + [thioredoxin]-disulfide + H2O = L-methionyl-(S)-S-oxide-[protein] + [thioredoxin]-dithiol. It carries out the reaction [thioredoxin]-disulfide + L-methionine + H2O = L-methionine (S)-S-oxide + [thioredoxin]-dithiol. Has an important function as a repair enzyme for proteins that have been inactivated by oxidation. Catalyzes the reversible oxidation-reduction of methionine sulfoxide in proteins to methionine. The protein is Peptide methionine sulfoxide reductase (PMSR) of Brassica napus (Rape).